A 159-amino-acid polypeptide reads, in one-letter code: Capsid protein (159 aa).

An N-acetylserine; by host modification is found at serine 2.

Belongs to the virgaviridae capsid protein family.

It is found in the virion. In terms of biological role, capsid protein self-assembles to form rod-shaped virions about 18 nm in diameter with a central canal enclosing the viral genomic RNA. This chain is Capsid protein (CP), found in Tobacco mosaic virus (strain ER) (TMV).